Consider the following 91-residue polypeptide: UPF0250 protein NMA1380 (91 aa).

The protein belongs to the UPF0250 family.

The sequence is that of UPF0250 protein NMA1380 from Neisseria meningitidis serogroup A / serotype 4A (strain DSM 15465 / Z2491).